The primary structure comprises 116 residues: Large ribosomal subunit protein uL23 (116 aa).

It belongs to the universal ribosomal protein uL23 family. Part of the 50S ribosomal subunit. Contacts protein L29, and trigger factor when it is bound to the ribosome.

In terms of biological role, one of the early assembly proteins it binds 23S rRNA. One of the proteins that surrounds the polypeptide exit tunnel on the outside of the ribosome. Forms the main docking site for trigger factor binding to the ribosome. The polypeptide is Large ribosomal subunit protein uL23 (Psychrobacter sp. (strain PRwf-1)).